Consider the following 313-residue polypeptide: uncharacterized protein (313 aa).

An NADP(+)-binding site is contributed by 29–61 (ALVTGGGTGLGKAIATTFAHLGASVAIAARRLD).

It belongs to the short-chain dehydrogenases/reductases (SDR) family. 2,4-dienoyl-CoA reductase subfamily.

This is an uncharacterized protein from Caenorhabditis elegans.